Here is a 191-residue protein sequence, read N- to C-terminus: Holliday junction branch migration complex subunit RuvA (191 aa).

The interval 1–64 (MIGRLTGTLA…EDAQLLYGFL (64 aa)) is domain I. Positions 65 to 138 (TATERATFRQ…KGKLGPDLAL (74 aa)) are domain II. The interval 138–142 (LPGAV) is flexible linker. Residues 143–191 (IRNEAQSDIVQALIALGYNEREAAAAIKPLPADVGVSDGIKLALRALGK) are domain III.

This sequence belongs to the RuvA family. Homotetramer. Forms an RuvA(8)-RuvB(12)-Holliday junction (HJ) complex. HJ DNA is sandwiched between 2 RuvA tetramers; dsDNA enters through RuvA and exits via RuvB. An RuvB hexamer assembles on each DNA strand where it exits the tetramer. Each RuvB hexamer is contacted by two RuvA subunits (via domain III) on 2 adjacent RuvB subunits; this complex drives branch migration. In the full resolvosome a probable DNA-RuvA(4)-RuvB(12)-RuvC(2) complex forms which resolves the HJ.

It is found in the cytoplasm. The RuvA-RuvB-RuvC complex processes Holliday junction (HJ) DNA during genetic recombination and DNA repair, while the RuvA-RuvB complex plays an important role in the rescue of blocked DNA replication forks via replication fork reversal (RFR). RuvA specifically binds to HJ cruciform DNA, conferring on it an open structure. The RuvB hexamer acts as an ATP-dependent pump, pulling dsDNA into and through the RuvAB complex. HJ branch migration allows RuvC to scan DNA until it finds its consensus sequence, where it cleaves and resolves the cruciform DNA. The chain is Holliday junction branch migration complex subunit RuvA from Leptothrix cholodnii (strain ATCC 51168 / LMG 8142 / SP-6) (Leptothrix discophora (strain SP-6)).